The primary structure comprises 1347 residues: Protocadherin-11 X-linked (1347 aa).

The first 23 residues, 1 to 23 (MDLLSGTYIFAVLLACVVFHSGA), serve as a signal peptide directing secretion. The Extracellular segment spans residues 24 to 812 (QEKNYTIREE…VSSPTSDYVK (789 aa)). Cadherin domains are found at residues 26 to 139 (KNYT…APLF), 140 to 249 (PATV…HPVF), 250 to 355 (KETE…VPSI), 362 to 466 (NPIN…APVF), 467 to 570 (TQSF…SPVF), 571 to 673 (THNE…KPVF), and 677 to 795 (PSNY…APVT). N-linked (GlcNAc...) asparagine glycosylation is found at Asn27, Asn48, and Asn54. Asn344 is a glycosylation site (N-linked (GlcNAc...) asparagine). Residue Asn553 is glycosylated (N-linked (GlcNAc...) asparagine). Asn773 is a glycosylation site (N-linked (GlcNAc...) asparagine). A helical transmembrane segment spans residues 813–833 (ILVAAVAGTVTVVVVIFITAV). Over 834-1347 (VRCRQAPHLK…DSPIMEEHPL (514 aa)) the chain is Cytoplasmic. 4 disordered regions span residues 1031 to 1050 (IWIH…GKSQ), 1057 to 1091 (LPEG…GYPQ), 1097 to 1116 (RATP…ESTF), and 1325 to 1347 (TFTP…EHPL).

Its subcellular location is the cell membrane. In terms of biological role, potential calcium-dependent cell-adhesion protein. The protein is Protocadherin-11 X-linked (PCDH11X) of Pongo pygmaeus (Bornean orangutan).